A 541-amino-acid polypeptide reads, in one-letter code: MNAIVEQLKSTAAATKATDLRAAFAADAQRFSRFSVSLDDLLMDYSKTAVNDEILKLLVKLAEEGGVERKREEMFSGKAINFTEDRAVLHTALRNRSNTPVLVDGKDVMPDVNAVLAAMGKFADDIRSGALKGATGKAITDVINIGIGGSDLGPVMATLALAPFHDGPRAHFVSNIDGAHIADILKLVQPETTLFIVASKTFTTVETMTNAQTARSFIAKSLGEAAVQHHFAAVSTALDKVAAFGIDSARVFGFWDWVGGRYSIWSAIGLPLMIAIGPENFGKFLDGAHAVDNHFRQAPVTENLPMLLGLIGFYHRNVLGYPTRAILPYDQRLSRFPAYLQQLDMESNGKGVTIDGTPVDGNSGPVVWGEPGTNGQHAFYQLIHQGTSIIPAEFMIAANAFEPELRHQHQLLISNVLAQSEALMKGRTFAEAKKQLTDKGMDDKKADFIAPHRVFTGNRPSITFVYDKLTPYALGRLIALYEHRVFVEGVLFRINSFDQWGVELGKELATGLLPVVEGKESAASHDSSTQGLVAALAKLAK.

Catalysis depends on E346, which acts as the Proton donor. Catalysis depends on residues H377 and K506.

It belongs to the GPI family.

Its subcellular location is the cytoplasm. It carries out the reaction alpha-D-glucose 6-phosphate = beta-D-fructose 6-phosphate. It functions in the pathway carbohydrate biosynthesis; gluconeogenesis. It participates in carbohydrate degradation; glycolysis; D-glyceraldehyde 3-phosphate and glycerone phosphate from D-glucose: step 2/4. Catalyzes the reversible isomerization of glucose-6-phosphate to fructose-6-phosphate. This Rhizobium etli (strain ATCC 51251 / DSM 11541 / JCM 21823 / NBRC 15573 / CFN 42) protein is Glucose-6-phosphate isomerase.